A 201-amino-acid chain; its full sequence is MNLDGLIVGLGNPGKEYENTRHNLGFMLADALLDEVRRTAPHAVTSLGTGKKKYDLWKCAPLTGGSSWLVAKPLTFMNRSGDAVAHICGFYRIPPEKILVLHDELDLPLGRMKFKTAGGLAGHNGLKSIAERTGSKDFHRLRLGIGKPQSGQTTGYVLGRFGKDEQALVEKVLQAGVEGIRIFAQQGAVAATQFINAQDIQ.

Tyr17 is a binding site for tRNA. Residue His22 is the Proton acceptor of the active site. Residues Phe76, Asn78, and Asn124 each contribute to the tRNA site.

The protein belongs to the PTH family. Monomer.

Its subcellular location is the cytoplasm. It catalyses the reaction an N-acyl-L-alpha-aminoacyl-tRNA + H2O = an N-acyl-L-amino acid + a tRNA + H(+). In terms of biological role, hydrolyzes ribosome-free peptidyl-tRNAs (with 1 or more amino acids incorporated), which drop off the ribosome during protein synthesis, or as a result of ribosome stalling. Its function is as follows. Catalyzes the release of premature peptidyl moieties from peptidyl-tRNA molecules trapped in stalled 50S ribosomal subunits, and thus maintains levels of free tRNAs and 50S ribosomes. In Oleidesulfovibrio alaskensis (strain ATCC BAA-1058 / DSM 17464 / G20) (Desulfovibrio alaskensis), this protein is Peptidyl-tRNA hydrolase.